The chain runs to 447 residues: Coagulation factor VII (447 aa).

The N-terminal stretch at 1 to 23 is a signal peptide; that stretch reads MLSQAWALALLCFLLSLWGSLPA. A propeptide spanning residues 24 to 40 is cleaved from the precursor; sequence VFLPQEQALSILHRPRR. The region spanning 41 to 85 is the Gla domain; it reads ANGFLEELLPGSLERECREELCSFEEAHEIFRNEERTRQFWVSYN. 4-carboxyglutamate occurs at positions 46, 47, 54, 56, 59, 60, 65, 66, 69, 74, and 75. Residues C57 and C62 are joined by a disulfide bond. Positions 86–122 constitute an EGF-like 1; calcium-binding domain; it reads DGDQCASSPCQNGGSCEDQLRSYICFCPDGFEGRNCE. 10 cysteine pairs are disulfide-bonded: C90-C101, C95-C110, C112-C121, C131-C142, C138-C152, C154-C167, C175-C302, C199-C204, C218-C234, and C350-C369. A glycan (O-linked (Glc...) serine) is linked at S92. O-linked (Glc...) serine; alternate glycosylation is present at S92. Residue S92 is glycosylated (O-linked (Xyl...) serine; alternate). Residue S100 is glycosylated (O-linked (Fuc) serine). The EGF-like 2 domain occupies 127–168; sequence SQLICANDNGGCEQYCGADPGAGRFCWCHEGYALQADGVSCA. The N-linked (GlcNAc...) asparagine glycan is linked to N185. Residues 193–432 enclose the Peptidase S1 domain; sequence IVGGHVCPKG…YTAWLRQLMG (240 aa). H233 functions as the Charge relay system in the catalytic mechanism. N243 is a glycosylation site (N-linked (GlcNAc...) asparagine). Catalysis depends on D282, which acts as the Charge relay system. Residue D378 coordinates substrate. A disulfide bond links C380 and C408. S384 (charge relay system) is an active-site residue.

It belongs to the peptidase S1 family. Heterodimer of a light chain and a heavy chain linked by a disulfide bond. Post-translationally, the vitamin K-dependent, enzymatic carboxylation of some glutamate residues allows the modified protein to bind calcium. In terms of processing, O-glycosylated. O-fucosylated by POFUT1 on a conserved serine or threonine residue found in the consensus sequence C2-X(4,5)-[S/T]-C3 of EGF domains, where C2 and C3 are the second and third conserved cysteines. Can be either O-glucosylated or O-xylosylated at Ser-92 by POGLUT1. In terms of tissue distribution, plasma.

The protein resides in the secreted. It carries out the reaction Selective cleavage of Arg-|-Ile bond in factor X to form factor Xa.. Its function is as follows. Initiates the extrinsic pathway of blood coagulation. Serine protease that circulates in the blood in a zymogen form. Factor VII is converted to factor VIIa by factor Xa, factor XIIa, factor IXa, or thrombin by minor proteolysis. In the presence of tissue factor and calcium ions, factor VIIa then converts factor X to factor Xa by limited proteolysis. Factor VIIa also converts factor IX to factor IXa in the presence of tissue factor and calcium. In Bos taurus (Bovine), this protein is Coagulation factor VII (F7).